The sequence spans 529 residues: Bifunctional purine biosynthesis protein PurH (529 aa).

The region spanning 1 to 148 is the MGS-like domain; it reads MQQRRPVRRA…KNHKDVAIVV (148 aa).

Belongs to the PurH family.

The catalysed reaction is (6R)-10-formyltetrahydrofolate + 5-amino-1-(5-phospho-beta-D-ribosyl)imidazole-4-carboxamide = 5-formamido-1-(5-phospho-D-ribosyl)imidazole-4-carboxamide + (6S)-5,6,7,8-tetrahydrofolate. It catalyses the reaction IMP + H2O = 5-formamido-1-(5-phospho-D-ribosyl)imidazole-4-carboxamide. The protein operates within purine metabolism; IMP biosynthesis via de novo pathway; 5-formamido-1-(5-phospho-D-ribosyl)imidazole-4-carboxamide from 5-amino-1-(5-phospho-D-ribosyl)imidazole-4-carboxamide (10-formyl THF route): step 1/1. It functions in the pathway purine metabolism; IMP biosynthesis via de novo pathway; IMP from 5-formamido-1-(5-phospho-D-ribosyl)imidazole-4-carboxamide: step 1/1. The chain is Bifunctional purine biosynthesis protein PurH from Salmonella paratyphi C (strain RKS4594).